Consider the following 206-residue polypeptide: Octanoyltransferase (206 aa).

The 177-residue stretch at 30–206 folds into the BPL/LPL catalytic domain; the sequence is PETNDEIWLV…EFVTLLNNSI (177 aa). Residues 69–76, 137–139, and 150–152 contribute to the substrate site; these read RGGQVTYH, SLG, and GIA. The Acyl-thioester intermediate role is filled by C168.

This sequence belongs to the LipB family.

The protein localises to the cytoplasm. It catalyses the reaction octanoyl-[ACP] + L-lysyl-[protein] = N(6)-octanoyl-L-lysyl-[protein] + holo-[ACP] + H(+). It functions in the pathway protein modification; protein lipoylation via endogenous pathway; protein N(6)-(lipoyl)lysine from octanoyl-[acyl-carrier-protein]: step 1/2. Functionally, catalyzes the transfer of endogenously produced octanoic acid from octanoyl-acyl-carrier-protein onto the lipoyl domains of lipoate-dependent enzymes. Lipoyl-ACP can also act as a substrate although octanoyl-ACP is likely to be the physiological substrate. This is Octanoyltransferase from Francisella tularensis subsp. holarctica (strain FTNF002-00 / FTA).